The sequence spans 163 residues: Pheromone-binding protein 1 (163 aa).

Residues 1-21 (MLGKISLLLLPVFVAINLVHS) form the signal peptide. Disulfide bonds link cysteine 40-cysteine 75, cysteine 71-cysteine 129, and cysteine 118-cysteine 138.

Belongs to the PBP/GOBP family. Antenna.

This major soluble protein in olfactory sensilla of male moths might serve to solubilize the extremely hydrophobic pheromone molecules and to transport pheromone through the aqueous lymph to receptors located on olfactory cilia. The sequence is that of Pheromone-binding protein 1 from Antheraea pernyi (Chinese oak silk moth).